The following is a 344-amino-acid chain: L-threonine 3-dehydrogenase (344 aa).

C38 provides a ligand contact to Zn(2+). Active-site charge relay system residues include T40 and H43. Zn(2+)-binding residues include H63, E64, C93, C96, C99, and C107. Residues I175, D195, R200, 263-265 (LGI), and 287-288 (IY) contribute to the NAD(+) site.

This sequence belongs to the zinc-containing alcohol dehydrogenase family. As to quaternary structure, homotetramer. It depends on Zn(2+) as a cofactor.

It localises to the cytoplasm. The enzyme catalyses L-threonine + NAD(+) = (2S)-2-amino-3-oxobutanoate + NADH + H(+). It participates in amino-acid degradation; L-threonine degradation via oxydo-reductase pathway; glycine from L-threonine: step 1/2. Catalyzes the NAD(+)-dependent oxidation of L-threonine to 2-amino-3-ketobutyrate. This is L-threonine 3-dehydrogenase from Deinococcus deserti (strain DSM 17065 / CIP 109153 / LMG 22923 / VCD115).